Consider the following 806-residue polypeptide: Acetyl-CoA decarbonylase/synthase complex subunit alpha 1 (806 aa).

C73, C76, C77, C79, C84, and C94 together coordinate [4Fe-4S] cluster. Position 117 (H117) interacts with CO. H250, C278, and C323 together coordinate [Ni-4Fe-4S] cluster. 4Fe-4S ferredoxin-type domains are found at residues 407–436 (DEQM…IPEA) and 445–475 (YSYL…LSVI). [4Fe-4S] cluster contacts are provided by C417, C420, C423, C427, C455, C458, C461, and C465. The [Ni-4Fe-4S] cluster site is built by C523, C552, and C587.

This sequence belongs to the Ni-containing carbon monoxide dehydrogenase family. Heterotetramer of two alpha and two epsilon subunits. The ACDS complex is made up of alpha, epsilon, beta, gamma and delta subunits with a probable stoichiometry of (alpha(2)epsilon(2))(4)-beta(8)-(gamma(1)delta(1))(8). [4Fe-4S] cluster serves as cofactor. Requires [Ni-4Fe-4S] cluster as cofactor.

It carries out the reaction CO + 2 oxidized [2Fe-2S]-[ferredoxin] + H2O = 2 reduced [2Fe-2S]-[ferredoxin] + CO2 + 2 H(+). It participates in one-carbon metabolism; methanogenesis from acetate. Functionally, part of the ACDS complex that catalyzes the reversible cleavage of acetyl-CoA, allowing growth on acetate as sole source of carbon and energy. The alpha-epsilon subcomponent functions as a carbon monoxide dehydrogenase. The chain is Acetyl-CoA decarbonylase/synthase complex subunit alpha 1 from Methanosarcina thermophila.